A 299-amino-acid chain; its full sequence is Inosose dehydratase (299 aa).

This sequence belongs to the IolE/MocC family. Glutathione serves as cofactor. It depends on Co(2+) as a cofactor. Mn(2+) is required as a cofactor.

The catalysed reaction is scyllo-inosose = 3D-3,5/4-trihydroxycyclohexane-1,2-dione + H2O. Its function is as follows. Catalyzes the dehydration of inosose (2-keto-myo-inositol, 2KMI or 2,4,6/3,5-pentahydroxycyclohexanone) to 3D-(3,5/4)-trihydroxycyclohexane-1,2-dione (D-2,3-diketo-4-deoxy-epi-inositol). The polypeptide is Inosose dehydratase (Klebsiella pneumoniae subsp. pneumoniae (strain ATCC 700721 / MGH 78578)).